A 207-amino-acid chain; its full sequence is Vascular endothelial growth factor B (207 aa).

A signal peptide spans 1-21; sequence MSPLLRRLLLAVLLQLAPAQA. Cystine bridges form between cysteine 47-cysteine 89, cysteine 78-cysteine 122, and cysteine 82-cysteine 124. Residues 124-139 show a composition bias toward basic and acidic residues; it reads CRPKKRESAVKPDRAS. Residues 124–207 are disordered; that stretch reads CRPKKRESAV…AASSVVKGGA (84 aa). Residues 174–201 are compositionally biased toward low complexity; it reads PSAHAAPSAASALTPGPATAAADAAASS.

It belongs to the PDGF/VEGF growth factor family. Homodimer; disulfide-linked. Can also form heterodimer with VEGF. VEGF-B186 is O-glycosylated.

The protein resides in the secreted. Its function is as follows. Growth factor for endothelial cells. VEGF-B167 binds heparin and neuropilin-1 whereas the binding to neuropilin-1 of VEGF-B186 is regulated by proteolysis. This Bos taurus (Bovine) protein is Vascular endothelial growth factor B (VEGFB).